The following is an 84-amino-acid chain: RNA-binding protein Hfq (84 aa).

In terms of domain architecture, Sm spans 11-71 (DTFLNHVRKN…ISTIMPGHPV (61 aa)).

This sequence belongs to the Hfq family. Homohexamer.

In terms of biological role, RNA chaperone that binds small regulatory RNA (sRNAs) and mRNAs to facilitate mRNA translational regulation in response to envelope stress, environmental stress and changes in metabolite concentrations. Also binds with high specificity to tRNAs. This is RNA-binding protein Hfq from Methylobacterium nodulans (strain LMG 21967 / CNCM I-2342 / ORS 2060).